The following is an 885-amino-acid chain: Probable LRR receptor-like serine/threonine-protein kinase At1g51820 (885 aa).

Residues 1-20 (MERHFVFIATYLLIFHLVQA) form the signal peptide. Topologically, residues 21 to 509 (QNQTGFISVD…GHKKKSVIVP (489 aa)) are extracellular. N-linked (GlcNAc...) asparagine glycosylation is found at Asn-22, Asn-93, Asn-135, Asn-194, Asn-228, Asn-250, Asn-254, Asn-281, Asn-287, Asn-424, Asn-437, Asn-456, and Asn-461. LRR repeat units lie at residues 403–424 (IITS…AIKN), 427–447 (HLQI…EFLA), and 451–473 (SLLV…LLQK). A helical transmembrane segment spans residues 510–530 (VVASIASIAVLIGALVLFLIL). Residues 531–885 (RKKRSPKVEG…FGTEVSPNAR (355 aa)) lie on the Cytoplasmic side of the membrane. Residues 578–851 (NNFQRILGKG…QVVIELNECL (274 aa)) form the Protein kinase domain. Residues 584–592 (LGKGGFGMV) and Lys-606 contribute to the ATP site. Tyr-651 is modified (phosphotyrosine). Asp-703 functions as the Proton acceptor in the catalytic mechanism. Ser-737 bears the Phosphoserine mark. Phosphothreonine is present on residues Thr-738 and Thr-743. Phosphotyrosine is present on Tyr-751.

Belongs to the protein kinase superfamily. Ser/Thr protein kinase family.

It is found in the membrane. The enzyme catalyses L-seryl-[protein] + ATP = O-phospho-L-seryl-[protein] + ADP + H(+). It catalyses the reaction L-threonyl-[protein] + ATP = O-phospho-L-threonyl-[protein] + ADP + H(+). This chain is Probable LRR receptor-like serine/threonine-protein kinase At1g51820, found in Arabidopsis thaliana (Mouse-ear cress).